The chain runs to 1158 residues: ATP-dependent helicase/deoxyribonuclease subunit B (1158 aa).

Residues 1 to 275 enclose the UvrD-like helicase ATP-binding domain; sequence MTLHAYLGRA…QYFNQLYRFN (275 aa). Position 8-15 (8-15) interacts with ATP; it reads GRAGTGKS. Residues 269–583 enclose the UvrD-like helicase C-terminal domain; sequence NQLYRFNNQD…SIGTMDLAKV (315 aa). Residues cysteine 784, cysteine 1112, cysteine 1115, and cysteine 1121 each contribute to the [4Fe-4S] cluster site.

The protein belongs to the helicase family. AddB/RexB type 1 subfamily. In terms of assembly, heterodimer of AddA and AddB. Mg(2+) is required as a cofactor. It depends on [4Fe-4S] cluster as a cofactor.

The heterodimer acts as both an ATP-dependent DNA helicase and an ATP-dependent, dual-direction single-stranded exonuclease. Recognizes the chi site generating a DNA molecule suitable for the initiation of homologous recombination. The AddB subunit has 5' -&gt; 3' nuclease activity but not helicase activity. The chain is ATP-dependent helicase/deoxyribonuclease subunit B from Staphylococcus aureus (strain MSSA476).